Consider the following 326-residue polypeptide: NADH-specific methylglyoxal reductase (326 aa).

Residues 20–21 and D54 each bind NAD(+); that span reads TW. The Proton donor role is filled by Y59. Residues Q189, 217-222, G291, and Q297 contribute to the NAD(+) site; that span reads YSPLEQ.

Belongs to the aldo/keto reductase family. Aldo/keto reductase 11 subfamily. Monomer.

The catalysed reaction is hydroxyacetone + NAD(+) = methylglyoxal + NADH + H(+). Its function is as follows. Catalyzes the NADH-dependent reduction of methylglyoxal (2-oxopropanal) in vitro. It is not known if this activity has physiological significance. Cannot use NADPH as a cosubstrate. Seems to play some role in intestinal colonization. This is NADH-specific methylglyoxal reductase (ydjG) from Escherichia coli (strain K12).